Here is a 187-residue protein sequence, read N- to C-terminus: 1,6-anhydro-N-acetylmuramyl-L-alanine amidase AmpD (187 aa).

Positions 29–167 constitute an N-acetylmuramoyl-L-alanine amidase domain; the sequence is SLLVVHNISL…TPDRKTDPGP (139 aa). Residue His34 participates in Zn(2+) binding. The active-site Proton acceptor is Glu116. Residues His154 and Asp164 each coordinate Zn(2+).

This sequence belongs to the N-acetylmuramoyl-L-alanine amidase 2 family. The cofactor is Zn(2+).

The protein localises to the cytoplasm. It catalyses the reaction Hydrolyzes the link between N-acetylmuramoyl residues and L-amino acid residues in certain cell-wall glycopeptides.. Involved in cell wall peptidoglycan recycling. Specifically cleaves the amide bond between the lactyl group of N-acetylmuramic acid and the alpha-amino group of the L-alanine in degradation products containing an anhydro N-acetylmuramyl moiety. The chain is 1,6-anhydro-N-acetylmuramyl-L-alanine amidase AmpD (ampD) from Salmonella typhimurium (strain LT2 / SGSC1412 / ATCC 700720).